The primary structure comprises 111 residues: MNAQALVLTDNAANKVRQLRDSEGNDDLMLRVYVTGGGCSGFSYGFNFAESVNEDDAEFVNGDVKMLVDSLSYQYLVGSVVDYVEGLEGSRFIVQNPNATTTCGCGSSFSI.

The iron-sulfur cluster site is built by Cys-39, Cys-103, and Cys-105.

This sequence belongs to the HesB/IscA family. In terms of assembly, homodimer. Iron-sulfur cluster is required as a cofactor.

Required for insertion of 4Fe-4S clusters for at least IspG. This is Iron-sulfur cluster insertion protein ErpA from Acinetobacter baumannii (strain AB307-0294).